The chain runs to 389 residues: tRNA-specific 2-thiouridylase MnmA (389 aa).

ATP is bound by residues 34–41 (AMSGGVDS) and Leu-60. Cys-128 serves as the catalytic Nucleophile. Cysteines 128 and 225 form a disulfide. Gly-152 provides a ligand contact to ATP. An interaction with tRNA region spans residues 174-176 (RDQ). Cys-225 serves as the catalytic Cysteine persulfide intermediate.

This sequence belongs to the MnmA/TRMU family.

It localises to the cytoplasm. The enzyme catalyses S-sulfanyl-L-cysteinyl-[protein] + uridine(34) in tRNA + AH2 + ATP = 2-thiouridine(34) in tRNA + L-cysteinyl-[protein] + A + AMP + diphosphate + H(+). Catalyzes the 2-thiolation of uridine at the wobble position (U34) of tRNA, leading to the formation of s(2)U34. The chain is tRNA-specific 2-thiouridylase MnmA from Paracoccus denitrificans (strain Pd 1222).